A 134-amino-acid chain; its full sequence is B3 domain-containing protein At1g16640 (134 aa).

The segment at residues 7 to 100 is a DNA-binding region (TF-B3); sequence VQFMKPFISE…TFYVIIYGHN (94 aa).

It is found in the nucleus. The chain is B3 domain-containing protein At1g16640 from Arabidopsis thaliana (Mouse-ear cress).